The following is a 652-amino-acid chain: ATP-dependent zinc metalloprotease FtsH (652 aa).

Residues 1–11 (MKKQNNGLIKN) are Cytoplasmic-facing. A helical membrane pass occupies residues 12 to 32 (PFLWLLFIFFLVTGFQYFYSG). Residues 33–131 (NNSGGSQQIN…EVTVKHESSS (99 aa)) lie on the Extracellular side of the membrane. A helical membrane pass occupies residues 132-152 (GIWINLLVSIVPFGILFFFLF). Over 153-652 (SMMGNMGGGN…EVKSKMNDEK (500 aa)) the chain is Cytoplasmic. Residue 227-234 (GPPGTGKT) coordinates ATP. H449 contacts Zn(2+). The active site involves E450. Positions 453 and 525 each coordinate Zn(2+). The disordered stretch occupies residues 628-652 (MPEAVEEESHALSYDEVKSKMNDEK). Basic and acidic residues predominate over residues 634–652 (EESHALSYDEVKSKMNDEK).

In the central section; belongs to the AAA ATPase family. The protein in the C-terminal section; belongs to the peptidase M41 family. In terms of assembly, homohexamer. The cofactor is Zn(2+).

It is found in the cell membrane. Acts as a processive, ATP-dependent zinc metallopeptidase for both cytoplasmic and membrane proteins. Plays a role in the quality control of integral membrane proteins. The sequence is that of ATP-dependent zinc metalloprotease FtsH from Streptococcus pneumoniae serotype 4 (strain ATCC BAA-334 / TIGR4).